The primary structure comprises 332 residues: Biotin synthase (332 aa).

The region spanning Tyr51 to Arg279 is the Radical SAM core domain. [4Fe-4S] cluster is bound by residues Cys66, Cys70, and Cys73. 4 residues coordinate [2Fe-2S] cluster: Cys110, Cys142, Cys202, and Arg274.

This sequence belongs to the radical SAM superfamily. Biotin synthase family. As to quaternary structure, homodimer. [4Fe-4S] cluster is required as a cofactor. The cofactor is [2Fe-2S] cluster.

The enzyme catalyses (4R,5S)-dethiobiotin + (sulfur carrier)-SH + 2 reduced [2Fe-2S]-[ferredoxin] + 2 S-adenosyl-L-methionine = (sulfur carrier)-H + biotin + 2 5'-deoxyadenosine + 2 L-methionine + 2 oxidized [2Fe-2S]-[ferredoxin]. It functions in the pathway cofactor biosynthesis; biotin biosynthesis; biotin from 7,8-diaminononanoate: step 2/2. Catalyzes the conversion of dethiobiotin (DTB) to biotin by the insertion of a sulfur atom into dethiobiotin via a radical-based mechanism. This chain is Biotin synthase, found in Prochlorococcus marinus (strain MIT 9211).